The primary structure comprises 188 residues: Adenine phosphoribosyltransferase (188 aa).

It belongs to the purine/pyrimidine phosphoribosyltransferase family. In terms of assembly, homodimer.

It is found in the cytoplasm. The enzyme catalyses AMP + diphosphate = 5-phospho-alpha-D-ribose 1-diphosphate + adenine. It participates in purine metabolism; AMP biosynthesis via salvage pathway; AMP from adenine: step 1/1. Its function is as follows. Catalyzes a salvage reaction resulting in the formation of AMP, that is energically less costly than de novo synthesis. The polypeptide is Adenine phosphoribosyltransferase (Burkholderia thailandensis (strain ATCC 700388 / DSM 13276 / CCUG 48851 / CIP 106301 / E264)).